The sequence spans 447 residues: Glucose-6-phosphate isomerase (447 aa).

The Proton donor role is filled by glutamate 288. Catalysis depends on residues histidine 309 and lysine 423.

Belongs to the GPI family.

It is found in the cytoplasm. It catalyses the reaction alpha-D-glucose 6-phosphate = beta-D-fructose 6-phosphate. It functions in the pathway carbohydrate biosynthesis; gluconeogenesis. Its pathway is carbohydrate degradation; glycolysis; D-glyceraldehyde 3-phosphate and glycerone phosphate from D-glucose: step 2/4. Functionally, catalyzes the reversible isomerization of glucose-6-phosphate to fructose-6-phosphate. The protein is Glucose-6-phosphate isomerase of Lactobacillus gasseri (strain ATCC 33323 / DSM 20243 / BCRC 14619 / CIP 102991 / JCM 1131 / KCTC 3163 / NCIMB 11718 / NCTC 13722 / AM63).